A 143-amino-acid chain; its full sequence is Nucleoside diphosphate kinase (143 aa).

Residues K11, F59, R87, T93, R104, and N114 each coordinate ATP. H117 serves as the catalytic Pros-phosphohistidine intermediate.

This sequence belongs to the NDK family. In terms of assembly, homotetramer. The cofactor is Mg(2+).

The protein resides in the cytoplasm. The enzyme catalyses a 2'-deoxyribonucleoside 5'-diphosphate + ATP = a 2'-deoxyribonucleoside 5'-triphosphate + ADP. It catalyses the reaction a ribonucleoside 5'-diphosphate + ATP = a ribonucleoside 5'-triphosphate + ADP. Its function is as follows. Major role in the synthesis of nucleoside triphosphates other than ATP. The ATP gamma phosphate is transferred to the NDP beta phosphate via a ping-pong mechanism, using a phosphorylated active-site intermediate. This chain is Nucleoside diphosphate kinase, found in Alteromonas mediterranea (strain DSM 17117 / CIP 110805 / LMG 28347 / Deep ecotype).